We begin with the raw amino-acid sequence, 235 residues long: Cobalt transport protein CbiM (235 aa).

Residues 1-33 (MRYLKFFLLLVFLVPSFGFSMHIMEGFLPPTHA) form the signal peptide. Transmembrane regions (helical) follow at residues 34-51 (LIWY…LFTI), 63-83 (MLLA…IPSV), 95-115 (LGAI…VLLF), 118-138 (LLLA…MAIV), 156-176 (NIAV…TTSF), and 199-219 (IFAI…VVVI).

The protein belongs to the CbiM family. As to quaternary structure, forms an energy-coupling factor (ECF) transporter complex composed of an ATP-binding protein (A component, CbiO), a transmembrane protein (T component, CbiQ) and 2 possible substrate-capture proteins (S components, CbiM and CbiN) of unknown stoichimetry.

The protein localises to the cell inner membrane. It functions in the pathway cofactor biosynthesis; adenosylcobalamin biosynthesis. In terms of biological role, part of the energy-coupling factor (ECF) transporter complex CbiMNOQ involved in cobalt import. The chain is Cobalt transport protein CbiM from Thermosipho melanesiensis (strain DSM 12029 / CIP 104789 / BI429).